Consider the following 214-residue polypeptide: Phycocyanin alpha phycocyanobilin lyase CpcF (214 aa).

It belongs to the CpcE/RpcE/PecE family. In terms of assembly, cpcE and CpcF associate to form a lyase.

Functionally, required for the chromophorylation of the cpcA gene product. The chain is Phycocyanin alpha phycocyanobilin lyase CpcF (cpcF) from Synechocystis sp. (strain ATCC 27184 / PCC 6803 / Kazusa).